Here is a 99-residue protein sequence, read N- to C-terminus: Large ribosomal subunit protein uL23 (99 aa).

The protein belongs to the universal ribosomal protein uL23 family. In terms of assembly, part of the 50S ribosomal subunit. Contacts protein L29, and trigger factor when it is bound to the ribosome.

In terms of biological role, one of the early assembly proteins it binds 23S rRNA. One of the proteins that surrounds the polypeptide exit tunnel on the outside of the ribosome. Forms the main docking site for trigger factor binding to the ribosome. This is Large ribosomal subunit protein uL23 from Francisella tularensis subsp. tularensis (strain SCHU S4 / Schu 4).